Consider the following 350-residue polypeptide: Streptomycin biosynthesis operon possible regulatory protein (350 aa).

Positions M1 to E10 are enriched in polar residues. Disordered regions lie at residues M1–T20, A168–T189, and A211–D258. Basic and acidic residues-rich tracts occupy residues I177–T189 and D223–Q242.

This is Streptomycin biosynthesis operon possible regulatory protein (strR) from Streptomyces griseus.